The primary structure comprises 256 residues: 6-phosphogluconolactonase (256 aa).

The protein belongs to the glucosamine/galactosamine-6-phosphate isomerase family. 6-phosphogluconolactonase subfamily.

It carries out the reaction 6-phospho-D-glucono-1,5-lactone + H2O = 6-phospho-D-gluconate + H(+). It participates in carbohydrate degradation; pentose phosphate pathway; D-ribulose 5-phosphate from D-glucose 6-phosphate (oxidative stage): step 2/3. Functionally, hydrolysis of 6-phosphogluconolactone to 6-phosphogluconate. This is 6-phosphogluconolactonase (pgl) from Chlamydia muridarum (strain MoPn / Nigg).